Reading from the N-terminus, the 1455-residue chain is Fanconi anemia group A protein (1455 aa).

The Nuclear localization signal signature appears at 18–34 (RRRAWAELLAGRVKREK). S1449 is subject to Phosphoserine.

In terms of assembly, belongs to the multisubunit FA complex composed of FANCA, FANCB, FANCC, FANCE, FANCF, FANCG, FANCL/PHF9 and FANCM. The complex is not found in FA patients. In complex with FANCF, FANCG and FANCL, but not with FANCC, nor FANCE, interacts with HES1; this interaction may be essential for the stability and nuclear localization of FA core complex proteins. The complex with FANCC and FANCG may also include EIF2AK2 and HSP70. Interacts with FAAP20/C1orf86; interaction is direct. Phosphorylation is required for the formation of the nuclear complex. Not phosphorylated in cells derived from groups A, B, C, E, F, G, and H.

The protein localises to the nucleus. The protein resides in the cytoplasm. Its function is as follows. DNA repair protein that may operate in a postreplication repair or a cell cycle checkpoint function. May be involved in interstrand DNA cross-link repair and in the maintenance of normal chromosome stability. This is Fanconi anemia group A protein (FANCA) from Homo sapiens (Human).